A 372-amino-acid chain; its full sequence is Protein phosphatase Mn(2+)-dependent 1K (372 aa).

A mitochondrion-targeting transit peptide spans 1–29; sequence MLSAAFITLLRSGGNQVKKRVLLSSILLQ. Residues 46-61 form a critical for association with the BCKDH complex region; that stretch reads RCSRFDPDGSGQPATW. The 253-residue stretch at 94-346 folds into the PPM-type phosphatase domain; that stretch reads NVGCASLIGK…DNSTAVVVPF (253 aa). Positions 127 and 128 each coordinate Mn(2+). A Phosphoserine modification is found at S248. Residues D298 and D337 each coordinate Mn(2+).

This sequence belongs to the PP2C family. Monomer. Interacts with E1 and E2 components of the branched-chain alpha-ketoacid dehydrogenase (BCKDH) complex; this interaction requires colocalization in mitochondria. Interacts with BCKDHA but not with BCKDHB of the E1 component. Interacts with the 24-meric E2 core composed of DBT monomers with a 24:1 stoichiometry; the N-terminal region (residues 49-61) of PPM1K and C-terminal linker of the lipoyl domain of DBT (residues 145-160) are critical for this interaction, whereas the lipoyl prosthetic group is dispensable. Competes with BCKDK for binding to the E2 core; this interaction is modulated by branched-chain alpha-keto acids. At steady state, BCKDH holoenzyme preferentially binds BCKDK and BCKDHA is phosphorylated. In response to high levels of branched-chain alpha-keto acids, the inhibitory BCKDK is replaced by activating PPM1K leading to BCKDHA dephosphorylation and BCAA degradation. Mn(2+) is required as a cofactor. As to expression, highly expressed in the heart, kidney, brain and liver and to a lesser extent in testis, lung, spleen and adipose tissue. Very low amount in muscle (at protein level). Also expressed in the thymus (at protein level) and the diaphragm. Significantly reduced in hypertrophied hearts.

It is found in the mitochondrion matrix. It carries out the reaction O-phospho-L-seryl-[3-methyl-2-oxobutanoate dehydrogenase] + H2O = L-seryl-[3-methyl-2-oxobutanoate dehydrogenase] + phosphate. It catalyses the reaction O-phospho-L-seryl-[protein] + H2O = L-seryl-[protein] + phosphate. It functions in the pathway protein modification. Serine/threonine-protein phosphatase component of macronutrients metabolism. Forms a functional kinase and phosphatase pair with BCKDK, serving as a metabolic regulatory node that coordinates branched-chain amino acids (BCAAs) with glucose and lipid metabolism via two distinct phosphoprotein targets: mitochondrial BCKDHA subunit of the branched-chain alpha-ketoacid dehydrogenase (BCKDH) complex and cytosolic ACLY, a lipogenic enzyme of Krebs cycle. At high levels of branched-chain ketoacids, dephosphorylates and activates mitochondrial BCKDH complex, a multisubunit complex consisting of three multimeric components each involved in different steps of BCAA catabolism: E1 composed of BCKDHA and BCKDHB, E2 core composed of DBT monomers, and E3 composed of DLD monomers. Tightly associates with the E2 component of BCKDH complex and dephosphorylates BCKDHA on Ser-334. Regulates the reversible phosphorylation of ACLY in response to changes in cellular carbohydrate abundance such as occurs during fasting to feeding metabolic transition. At fasting state, appears to dephosphorylate ACLY on Ser-455 and inactivate it. Refeeding stimulates MLXIPL/ChREBP transcription factor, leading to increased BCKDK to PPM1K expression ratio, phosphorylation and activation of ACLY that ultimately results in the generation of malonyl-CoA and oxaloacetate immediate substrates of de novo lipogenesis and gluconeogenesis, respectively. Recognizes phosphosites having SxS or RxxS motifs and strictly depends on Mn(2+) ions for the phosphatase activity. Regulates Ca(2+)-induced opening of mitochondrial transition pore and apoptotic cell death. The sequence is that of Protein phosphatase Mn(2+)-dependent 1K from Mus musculus (Mouse).